The following is a 122-amino-acid chain: Large ribosomal subunit protein uL14 (122 aa).

This sequence belongs to the universal ribosomal protein uL14 family. As to quaternary structure, part of the 50S ribosomal subunit. Forms a cluster with proteins L3 and L19. In the 70S ribosome, L14 and L19 interact and together make contacts with the 16S rRNA in bridges B5 and B8.

In terms of biological role, binds to 23S rRNA. Forms part of two intersubunit bridges in the 70S ribosome. The chain is Large ribosomal subunit protein uL14 from Flavobacterium psychrophilum (strain ATCC 49511 / DSM 21280 / CIP 103535 / JIP02/86).